The sequence spans 119 residues: Large ribosomal subunit protein bL20 (119 aa).

The protein belongs to the bacterial ribosomal protein bL20 family.

Binds directly to 23S ribosomal RNA and is necessary for the in vitro assembly process of the 50S ribosomal subunit. It is not involved in the protein synthesizing functions of that subunit. The protein is Large ribosomal subunit protein bL20 of Clostridium botulinum (strain Alaska E43 / Type E3).